A 627-amino-acid chain; its full sequence is (+)-sabinene synthase, chloroplastic (627 aa).

The transit peptide at 1–46 (MSVISIVPLASNSCLYKSLMSSTHELKALCRPIATLGMCRRGKSVM) directs the protein to the chloroplast. Mg(2+) is bound by residues Asp378, Asp382, and Asp530. The short motif at 378-382 (DDIYD) is the DDXXD motif element.

This sequence belongs to the terpene synthase family. Tpsd subfamily. Monomer. It depends on Mg(2+) as a cofactor.

Its subcellular location is the plastid. It localises to the chloroplast. The enzyme catalyses (2E)-geranyl diphosphate = (1R,5R)-sabinene + diphosphate. The protein operates within terpene metabolism; oleoresin biosynthesis. Functionally, terpene synthase (TPS) involved in defensive oleoresin formation in conifers in response to insect attack (e.g. white pine weevil P.strobi) or other injury. Produces (+)-sabinene from geranyl diphosphate, but has no activity with geranylgeranyl diphosphate or farnesyl diphosphate. The polypeptide is (+)-sabinene synthase, chloroplastic (TPS-sab) (Picea sitchensis (Sitka spruce)).